Here is a 286-residue protein sequence, read N- to C-terminus: Bifunctional protein FolD (286 aa).

NADP(+)-binding positions include 165-167 (GRS) and S190.

The protein belongs to the tetrahydrofolate dehydrogenase/cyclohydrolase family. Homodimer.

It catalyses the reaction (6R)-5,10-methylene-5,6,7,8-tetrahydrofolate + NADP(+) = (6R)-5,10-methenyltetrahydrofolate + NADPH. The catalysed reaction is (6R)-5,10-methenyltetrahydrofolate + H2O = (6R)-10-formyltetrahydrofolate + H(+). It functions in the pathway one-carbon metabolism; tetrahydrofolate interconversion. In terms of biological role, catalyzes the oxidation of 5,10-methylenetetrahydrofolate to 5,10-methenyltetrahydrofolate and then the hydrolysis of 5,10-methenyltetrahydrofolate to 10-formyltetrahydrofolate. This chain is Bifunctional protein FolD, found in Burkholderia orbicola (strain MC0-3).